A 204-amino-acid polypeptide reads, in one-letter code: Translation initiation factor IF-3 (204 aa).

The segment at 169–204 (VPKAAPKRDSGRSESAQEAPTARSAEASRPEAPANA) is disordered.

The protein belongs to the IF-3 family. Monomer.

Its subcellular location is the cytoplasm. Functionally, IF-3 binds to the 30S ribosomal subunit and shifts the equilibrium between 70S ribosomes and their 50S and 30S subunits in favor of the free subunits, thus enhancing the availability of 30S subunits on which protein synthesis initiation begins. The polypeptide is Translation initiation factor IF-3 (Deinococcus geothermalis (strain DSM 11300 / CIP 105573 / AG-3a)).